A 142-amino-acid chain; its full sequence is Large ribosomal subunit protein uL11 (142 aa).

It belongs to the universal ribosomal protein uL11 family. As to quaternary structure, part of the ribosomal stalk of the 50S ribosomal subunit. Interacts with L10 and the large rRNA to form the base of the stalk. L10 forms an elongated spine to which L12 dimers bind in a sequential fashion forming a multimeric L10(L12)X complex. One or more lysine residues are methylated.

Forms part of the ribosomal stalk which helps the ribosome interact with GTP-bound translation factors. The protein is Large ribosomal subunit protein uL11 of Pectobacterium carotovorum subsp. carotovorum (strain PC1).